Consider the following 139-residue polypeptide: Lysozyme (139 aa).

The first 19 residues, 1-19 (MTKYVILLAVLAFALHCDA), serve as a signal peptide directing secretion. The region spanning 20 to 139 (KRFTRCGLVQ…QHGLPDISDC (120 aa)) is the C-type lysozyme domain. 4 disulfide bridges follow: C25–C139, C46–C129, C81–C95, and C91–C109. Residues E51 and D69 contribute to the active site.

The protein belongs to the glycosyl hydrolase 22 family.

The catalysed reaction is Hydrolysis of (1-&gt;4)-beta-linkages between N-acetylmuramic acid and N-acetyl-D-glucosamine residues in a peptidoglycan and between N-acetyl-D-glucosamine residues in chitodextrins.. Lysozymes have primarily a bacteriolytic function; those in tissues and body fluids are associated with the monocyte-macrophage system and enhance the activity of immunoagents. This Hyalophora cecropia (Cecropia moth) protein is Lysozyme.